Consider the following 326-residue polypeptide: Ketol-acid reductoisomerase (NADP(+)) (326 aa).

A KARI N-terminal Rossmann domain is found at 1–180 (MDIIHDNAAD…GLTRGGVLEC (180 aa)). NADP(+)-binding positions include 24–27 (YGAQ), Arg-47, and Ser-51. The active site involves His-106. Gly-132 is an NADP(+) binding site. In terms of domain architecture, KARI C-terminal knotted spans 181–326 (TMAQETYEDL…AKIRSLFERN (146 aa)). The Mg(2+) site is built by Asp-189, Glu-193, Glu-225, and Glu-229. Ser-250 is a substrate binding site.

Belongs to the ketol-acid reductoisomerase family. It depends on Mg(2+) as a cofactor.

It carries out the reaction (2R)-2,3-dihydroxy-3-methylbutanoate + NADP(+) = (2S)-2-acetolactate + NADPH + H(+). It catalyses the reaction (2R,3R)-2,3-dihydroxy-3-methylpentanoate + NADP(+) = (S)-2-ethyl-2-hydroxy-3-oxobutanoate + NADPH + H(+). It functions in the pathway amino-acid biosynthesis; L-isoleucine biosynthesis; L-isoleucine from 2-oxobutanoate: step 2/4. The protein operates within amino-acid biosynthesis; L-valine biosynthesis; L-valine from pyruvate: step 2/4. In terms of biological role, involved in the biosynthesis of branched-chain amino acids (BCAA). Catalyzes an alkyl-migration followed by a ketol-acid reduction of (S)-2-acetolactate (S2AL) to yield (R)-2,3-dihydroxy-isovalerate. In the isomerase reaction, S2AL is rearranged via a Mg-dependent methyl migration to produce 3-hydroxy-3-methyl-2-ketobutyrate (HMKB). In the reductase reaction, this 2-ketoacid undergoes a metal-dependent reduction by NADPH to yield (R)-2,3-dihydroxy-isovalerate. The chain is Ketol-acid reductoisomerase (NADP(+)) from Akkermansia muciniphila (strain ATCC BAA-835 / DSM 22959 / JCM 33894 / BCRC 81048 / CCUG 64013 / CIP 107961 / Muc).